The sequence spans 431 residues: MNLSIVILAAGAGTRMKSKTPKVLHTLCGREMLYYVIKEAKKLSDDVSVVLFHESEMVKKSIEKYFSDIRYVIQDHVNYPGTGGALMGIEPKYQKILVLNGDMPLVEAEELKQFLRAGSDFVMSVLDLEDGSGYGRVVIHGGSVERIVEEKDATGEEKSLGTVNAGVYLFDRALLACYLPRLKNDNAQKEFYLTDVVEMARKDRLIVAPLFVKEENFKGVNSKADLAEAEAIMTGRIRRRWMREGVRMRLPETIYIDEGVKFVGECFIENGVSITGDSYIEESHIKAHSVIEESRVIRSDVGPMAHLRPQCEVTETHIGNFVEVKKSKLTGVKAGHLSYLGDCEVDEGSNIGAGVITCNYDGKKKHLTKIGKNVFVGSDSQLVAPVSIEDDSIIGAGSTITKNVKSGELALSRAKQENIAGFFARYFSSSK.

The pyrophosphorylase stretch occupies residues 1 to 223 (MNLSIVILAA…EENFKGVNSK (223 aa)). UDP-N-acetyl-alpha-D-glucosamine-binding positions include 8–11 (LAAG), lysine 22, glutamine 74, and 81–82 (GT). Position 102 (aspartate 102) interacts with Mg(2+). 4 residues coordinate UDP-N-acetyl-alpha-D-glucosamine: glycine 135, glutamate 149, asparagine 164, and asparagine 221. Asparagine 221 is a Mg(2+) binding site. A linker region spans residues 224–244 (ADLAEAEAIMTGRIRRRWMRE). Positions 245–431 (GVRMRLPETI…FFARYFSSSK (187 aa)) are N-acetyltransferase. UDP-N-acetyl-alpha-D-glucosamine-binding residues include arginine 308 and lysine 325. Catalysis depends on histidine 336, which acts as the Proton acceptor. Residues tyrosine 339 and asparagine 350 each contribute to the UDP-N-acetyl-alpha-D-glucosamine site. Acetyl-CoA contacts are provided by residues alanine 353, 359–360 (NY), serine 378, alanine 396, and arginine 413.

The protein in the N-terminal section; belongs to the N-acetylglucosamine-1-phosphate uridyltransferase family. This sequence in the C-terminal section; belongs to the transferase hexapeptide repeat family. In terms of assembly, homotrimer. It depends on Mg(2+) as a cofactor.

Its subcellular location is the cytoplasm. It carries out the reaction alpha-D-glucosamine 1-phosphate + acetyl-CoA = N-acetyl-alpha-D-glucosamine 1-phosphate + CoA + H(+). It catalyses the reaction N-acetyl-alpha-D-glucosamine 1-phosphate + UTP + H(+) = UDP-N-acetyl-alpha-D-glucosamine + diphosphate. Its pathway is nucleotide-sugar biosynthesis; UDP-N-acetyl-alpha-D-glucosamine biosynthesis; N-acetyl-alpha-D-glucosamine 1-phosphate from alpha-D-glucosamine 6-phosphate (route II): step 2/2. It participates in nucleotide-sugar biosynthesis; UDP-N-acetyl-alpha-D-glucosamine biosynthesis; UDP-N-acetyl-alpha-D-glucosamine from N-acetyl-alpha-D-glucosamine 1-phosphate: step 1/1. It functions in the pathway bacterial outer membrane biogenesis; LPS lipid A biosynthesis. Its function is as follows. Catalyzes the last two sequential reactions in the de novo biosynthetic pathway for UDP-N-acetylglucosamine (UDP-GlcNAc). The C-terminal domain catalyzes the transfer of acetyl group from acetyl coenzyme A to glucosamine-1-phosphate (GlcN-1-P) to produce N-acetylglucosamine-1-phosphate (GlcNAc-1-P), which is converted into UDP-GlcNAc by the transfer of uridine 5-monophosphate (from uridine 5-triphosphate), a reaction catalyzed by the N-terminal domain. The chain is Bifunctional protein GlmU from Wolinella succinogenes (strain ATCC 29543 / DSM 1740 / CCUG 13145 / JCM 31913 / LMG 7466 / NCTC 11488 / FDC 602W) (Vibrio succinogenes).